A 114-amino-acid polypeptide reads, in one-letter code: Putative movement protein (114 aa).

Residues 27–47 (LIGIILLVTVCLTVLWVCIML) form a helical membrane-spanning segment. Residues 79 to 114 (RTPFEATGPERERNWEARRQSTTVNPASQPNTGSVF) form a disordered region. Basic and acidic residues predominate over residues 86 to 97 (GPERERNWEARR). Residues 98 to 114 (QSTTVNPASQPNTGSVF) show a composition bias toward polar residues.

This sequence belongs to the nanovirus movement protein family.

It is found in the host cell membrane. Its function is as follows. May transport viral genome to neighboring plant cells directly through plasmosdesmata, without any budding. The movement protein allows efficient cell to cell propagation, by bypassing the host cell wall barrier. This Faba bean necrotic yellows virus (isolate Egyptian EV1-93) (FBNYV) protein is Putative movement protein (DNA-M).